The chain runs to 570 residues: MGLLWYLMSLSFYGILQSHASERCDDWGLDTMRQIQVFEDEPARIKCPLFEHFLKYNYSTAHSSGLTLIWYWTRQDRDLEEPINFRLPENRISKEKDVLWFRPTLLNDTGNYTCMLRNTTYCSKVAFPLEVVQKDSCFNSAMRFPVHKMYIEHGIHKITCPNVDGYFPSSVKPSVTWYKGCTEIVDFHNVLPEGMNLSFFIPLVSNNGNYTCVVTYPENGRLFHLTRTVTVKVVGSPKDALPPQIYSPNDRVVYEKEPGEELVIPCKVYFSFIMDSHNEVWWTIDGKKPDDVTVDITINESVSYSSTEDETRTQILSIKKVTPEDLRRNYVCHARNTKGEAEQAAKVKQKVIPPRYTVELACGFGATVFLVVVLIVVYHVYWLEMVLFYRAHFGTDETILDGKEYDIYVSYARNVEEEEFVLLTLRGVLENEFGYKLCIFDRDSLPGGIVTDETLSFIQKSRRLLVVLSPNYVLQGTQALLELKAGLENMASRGNINVILVQYKAVKDMKVKELKRAKTVLTVIKWKGEKSKYPQGRFWKQLQVAMPVKKSPRWSSNDKQGLSYSSLKNV.

The N-terminal stretch at 1–20 (MGLLWYLMSLSFYGILQSHA) is a signal peptide. 3 Ig-like C2-type domains span residues 21-128 (SERC…VAFP), 139-230 (NSAM…RTVT), and 243-348 (PQIY…AKVK). The Extracellular segment spans residues 21–367 (SERCDDWGLD…VELACGFGAT (347 aa)). 5 disulfide bridges follow: Cys-24-Cys-122, Cys-47-Cys-114, Cys-137-Cys-181, Cys-160-Cys-212, and Cys-266-Cys-332. The N-linked (GlcNAc...) asparagine glycan is linked to Asn-57. The essential for interaction with PTPRD stretch occupies residues 69-85 (IWYWTRQDRDLEEPINF). Asn-107, Asn-111, and Asn-118 each carry an N-linked (GlcNAc...) asparagine glycan. Asn-196, Asn-209, and Asn-299 each carry an N-linked (GlcNAc...) asparagine glycan. Residues 368–388 (VFLVVVLIVVYHVYWLEMVLF) form a helical membrane-spanning segment. At 389 to 570 (YRAHFGTDET…GLSYSSLKNV (182 aa)) the chain is on the cytoplasmic side. The region spanning 403 to 546 (KEYDIYVSYA…RFWKQLQVAM (144 aa)) is the TIR domain. Glu-482 is a catalytic residue. A disordered region spans residues 550-570 (KSPRWSSNDKQGLSYSSLKNV). Polar residues predominate over residues 553-570 (RWSSNDKQGLSYSSLKNV).

This sequence belongs to the interleukin-1 receptor family. As to quaternary structure, the interleukin-36 receptor complex is a heterodimer of IL1RL2 and IL1RAP; the association is inhibited by IL36RN. The interleukin-1 receptor complex is a heterodimer of IL1R1 and IL1RAP. Associates with IL1R2 to form a non-signaling interleukin-1 receptor complex. Interacts with IL-33-bound IL1RL1 to form the minimal interleukin-33 signaling complex with a 1:1:1 stoichiometry. Interacts with KIT (independently of stimulation with KITLG/SCF). A mast cell-specific KITLG/SCF-induced interleukin-33 signaling complex contains IL1RL1, IL1RAP, KIT and MYD88. Interacts (via the first immunoglobilin domain) with PTPRD (via the third immunoglobilin domain); induces pre- and postsynaptic differentiation of neurons. In terms of tissue distribution, detected in lung, brain, spleen, thymus and liver. Expressed in brain endothelial cells, astrocytes, microglia and neurons. Isoform 3 is predominantly expressed in brain; expressed in hippocampal neurons.

Its subcellular location is the cell membrane. The protein resides in the secreted. It catalyses the reaction NAD(+) + H2O = ADP-D-ribose + nicotinamide + H(+). Its function is as follows. Coreceptor for IL1RL2 in the IL-36 signaling system. Coreceptor with IL1R1 in the IL-1 signaling system. Associates with IL1R1 bound to IL1B to form the high affinity interleukin-1 receptor complex which mediates interleukin-1-dependent activation of NF-kappa-B and other pathways. Signaling involves the recruitment of adapter molecules such as TOLLIP, MYD88, and IRAK1 or IRAK2 via the respective TIR domains of the receptor/coreceptor subunits. Recruits TOLLIP to the signaling complex. Does not bind to interleukin-1 alone; binding of IL1RN to IL1R1, prevents its association with IL1R1 to form a signaling complex. The cellular response is modulated through a non-signaling association with the membrane IL1R2 decoy receptor. Secreted forms (isoforms 2 and 3) associate with secreted ligand-bound IL1R2 and increase the affinity of secreted IL1R2 for IL1B; this complex formation may be the dominant mechanism for neutralization of IL1B by secreted/soluble receptors. Coreceptor for IL1RL1 in the IL-33 signaling system. Can bidirectionally induce pre- and postsynaptic differentiation of neurons by trans-synaptically binding to PTPRD. May play a role in IL1B-mediated costimulation of IFNG production from T-helper 1 (Th1) cells. Associates with secreted ligand-bound IL1R2 and increases the affinity of secreted IL1R2 for IL1B; this complex formation may be the dominant mechanism for neutralization of IL1B by secreted/soluble receptors. Enhances the ability of secreted IL1R1 to inhibit IL-33 signaling. Functionally, required for Src phosphorylation by IL1B. Required for IL1B-potentiated NMDA-induced calcium influx in neurons acting in cooperation with IL1R1 isoform 2 to mediate Akt kinase activation. The polypeptide is Interleukin-1 receptor accessory protein (Il1rap) (Mus musculus (Mouse)).